A 1211-amino-acid chain; its full sequence is Transient receptor potential cation channel subfamily A member 1 homolog (1211 aa).

At 1–811 (MSKKSLGLDV…LKYKWNRLGR (811 aa)) the chain is on the cytoplasmic side. 17 ANK repeats span residues 49-79 (NLRSIIHQSAREGNVNALQEALLKAPLAVNA), 83-112 (DFMTPLHYAARYGNYDAVKLLLSKNALPNT), 116-169 (EGDT…EIDP), 173-202 (YQLTPLHYAAMKSNFSALHALIKLKADVDA), 206-235 (NKMTPLLLACVHGSQEIIQELIKANSNVTK), 239-270 (RLNTVFHIVALRGEPEYLEMMMDHDPVEAIKA), 277-306 (EKKTPLRMAVEGNHPETLKKILQMEKKNSC), 311-340 (REKELIHFAAEKGFLEVLKALVEAGGNKNE), 344-374 (VKAVPLHVAAQMNQLEVVSYLIEEEKDNIDV), 378-407 (QGLTPLMMAVTHDSKKCVEYLIAKKANLTI), 411-440 (DERTPVFIGAKFNALSSVEYILDHLRKKNK), 473-502 (DQNTPMHIVASNGYLEMMQLLQKHGASITQ), 506-535 (DEETALHRAAIGGQTGAVRQLLEWDIRLLL), 540-569 (MGNSALHLAARSGHDATTKVLLDNGADKEA), 573-602 (YQKTPLQVAVDSGKLETCQRLVAKGAQIES), 605-634 (DTKTVLHTAAFYGNESIVRYFIAEGVTIDR), and 638-669 (EGKTAFDIACENDHKDVARAFLETDQWKNLMI). The helical transmembrane segment at 812-832 (PMYYFALFMYLVFIVSLTQYV) threads the bilayer. The Extracellular segment spans residues 833–870 (RHTKAPYNVWNEESYYDSEYFDENETCPQINTTKPDVV). 2 N-linked (GlcNAc...) asparagine glycosylation sites follow: asparagine 856 and asparagine 863. Residues 871–891 (WKIIIQTLAVCQILVECFQLF) form a helical membrane-spanning segment. Topologically, residues 892–894 (QRK) are cytoplasmic. The chain crosses the membrane as a helical span at residues 895–915 (FAYLVNWENWIDCFIYSTALI). Residues 916-932 (TVYDFSECSATSGVRQN) lie on the Extracellular side of the membrane. Residues 933 to 953 (WQWILAALCIFFGWINLLFMI) form a helical membrane-spanning segment. Residues 954 to 975 (RKMPRFGIFVVMFVDIVKTFFR) lie on the Cytoplasmic side of the membrane. The helical transmembrane segment at 976–996 (FFPVFVLFIIAFSSSFYVILQ) threads the bilayer. The Extracellular segment spans residues 997 to 1004 (NRPEFSTI). The segment at residues 1005 to 1025 (FMSPLKTTVMMIGEFEFTGIF) is an intramembrane region (pore-forming). The Extracellular segment spans residues 1026–1048 (HGDETTHAEKMFGPAHTAVACAL). The chain crosses the membrane as a helical span at residues 1049 to 1069 (FFFFCIIMTILLMNLLVGLAV). The Cytoplasmic portion of the chain corresponds to 1070-1193 (DDIKGVQEKA…EKQVRLEAII (124 aa)). Residues 1149–1191 (EMYEREAEFTSEMTQKLQNQAAKLKNIQENIDVMYEKQVRLEA) are a coiled coil.

The protein belongs to the transient receptor (TC 1.A.4) family. As to quaternary structure, homotetramer. In terms of tissue distribution, expressed in many sensory neurons, including OLQ and IL1 neurons.

The protein localises to the cell membrane. In terms of biological role, receptor-activated non-selective cation channel involved in the nose-touch response and foraging behavior. Contributes to the neural responses of sensory neurons to touch, particularly after repeated mechanical stimulation. Has no apparent role in thermosensory or chemosensory behaviors. This Caenorhabditis elegans protein is Transient receptor potential cation channel subfamily A member 1 homolog (trpa-1).